Consider the following 153-residue polypeptide: 3-hydroxyacyl-[acyl-carrier-protein] dehydratase FabZ (153 aa).

The active site involves H52.

This sequence belongs to the thioester dehydratase family. FabZ subfamily.

It is found in the cytoplasm. It carries out the reaction a (3R)-hydroxyacyl-[ACP] = a (2E)-enoyl-[ACP] + H2O. In terms of biological role, involved in unsaturated fatty acids biosynthesis. Catalyzes the dehydration of short chain beta-hydroxyacyl-ACPs and long chain saturated and unsaturated beta-hydroxyacyl-ACPs. This Magnetococcus marinus (strain ATCC BAA-1437 / JCM 17883 / MC-1) protein is 3-hydroxyacyl-[acyl-carrier-protein] dehydratase FabZ.